The sequence spans 86 residues: Acyl carrier protein (86 aa).

A Carrier domain is found at 2 to 82 (ATVFERVKKV…AVVDYLKSKG (81 aa)). Position 37 is an O-(pantetheine 4'-phosphoryl)serine (S37).

It belongs to the acyl carrier protein (ACP) family. Post-translationally, 4'-phosphopantetheine is transferred from CoA to a specific serine of apo-ACP by AcpS. This modification is essential for activity because fatty acids are bound in thioester linkage to the sulfhydryl of the prosthetic group.

It is found in the cytoplasm. Its pathway is lipid metabolism; fatty acid biosynthesis. Its function is as follows. Carrier of the growing fatty acid chain in fatty acid biosynthesis. The sequence is that of Acyl carrier protein from Dehalococcoides mccartyi (strain ATCC BAA-2266 / KCTC 15142 / 195) (Dehalococcoides ethenogenes (strain 195)).